A 330-amino-acid chain; its full sequence is DNA-directed RNA polymerase subunit alpha (330 aa).

The alpha N-terminal domain (alpha-NTD) stretch occupies residues 1–231; it reads MQTNLLKPKT…EQLAVFAQLE (231 aa). The interval 250 to 330 is alpha C-terminal domain (alpha-CTD); sequence FDPILLRPVD…SWPPAGLDKR (81 aa).

Belongs to the RNA polymerase alpha chain family. Homodimer. The RNAP catalytic core consists of 2 alpha, 1 beta, 1 beta' and 1 omega subunit. When a sigma factor is associated with the core the holoenzyme is formed, which can initiate transcription.

It catalyses the reaction RNA(n) + a ribonucleoside 5'-triphosphate = RNA(n+1) + diphosphate. In terms of biological role, DNA-dependent RNA polymerase catalyzes the transcription of DNA into RNA using the four ribonucleoside triphosphates as substrates. The sequence is that of DNA-directed RNA polymerase subunit alpha from Polaromonas naphthalenivorans (strain CJ2).